Here is a 1954-residue protein sequence, read N- to C-terminus: Protein GREB1 (1954 aa).

3 disordered regions span residues 48-83, 238-342, and 1083-1235; these read LSSL…QLPP, LAAF…AKHE, and KGPK…GSSS. Positions 59-68 are enriched in acidic residues; the sequence is NEEEEEDGEG. Residues 292 to 303 show a composition bias toward low complexity; the sequence is SSLSALPRPSAL. Composition is skewed to basic and acidic residues over residues 1083-1099 and 1122-1133; these read KGPK…KLSS and GPVKRERSHSHD. A compositionally biased stretch (low complexity) spans 1134 to 1146; that stretch reads SASSSLSSRASGS. The span at 1187–1196 shows a compositional bias: polar residues; sequence RVSQGSTVIS. Low complexity predominate over residues 1224–1235; the sequence is SSQLSSSSGSSS. The chain crosses the membrane as a helical span at residues 1873-1893; sequence DMVFSGLLLYLCDSFVGASFL.

This sequence belongs to the GREB1 family.

Its subcellular location is the membrane. In terms of biological role, may play a role in estrogen-stimulated cell proliferation. The sequence is that of Protein GREB1 (Greb1) from Mus musculus (Mouse).